A 311-amino-acid polypeptide reads, in one-letter code: Malate dehydrogenase (311 aa).

Residues 7–13 and Asp34 each bind NAD(+); that span reads GAAGGIG. Substrate is bound by residues Arg81 and Arg87. Residues Asn94 and 117-119 contribute to the NAD(+) site; that span reads ITN. 2 residues coordinate substrate: Asn119 and Arg153. His177 (proton acceptor) is an active-site residue. An NAD(+)-binding site is contributed by Met227.

It belongs to the LDH/MDH superfamily. MDH type 1 family. Homodimer.

The catalysed reaction is (S)-malate + NAD(+) = oxaloacetate + NADH + H(+). In terms of biological role, catalyzes the reversible oxidation of malate to oxaloacetate. The polypeptide is Malate dehydrogenase (Vibrio atlanticus (strain LGP32) (Vibrio splendidus (strain Mel32))).